A 124-amino-acid polypeptide reads, in one-letter code: Holo-[acyl-carrier-protein] synthase (124 aa).

Mg(2+) is bound by residues Asp5 and Glu51.

This sequence belongs to the P-Pant transferase superfamily. AcpS family. It depends on Mg(2+) as a cofactor.

The protein localises to the cytoplasm. The enzyme catalyses apo-[ACP] + CoA = holo-[ACP] + adenosine 3',5'-bisphosphate + H(+). Transfers the 4'-phosphopantetheine moiety from coenzyme A to a Ser of acyl-carrier-protein. This Hydrogenobaculum sp. (strain Y04AAS1) protein is Holo-[acyl-carrier-protein] synthase.